Consider the following 245-residue polypeptide: Myelin protein P0 (245 aa).

The N-terminal stretch at 1–28 (MEPSGLRTPCSLLALVLLSALVLTPTLA) is a signal peptide. The Ig-like V-type domain occupies 29–143 (IEVYTDREVY…VGKSSYVHLQ (115 aa)). At 29–153 (IEVYTDREVY…VQEKGPARAG (125 aa)) the chain is on the extracellular side. Residues cysteine 49 and cysteine 125 are joined by a disulfide bond. N-linked (GlcNAc...) asparagine glycosylation is present at asparagine 120. Residues 154–174 (LILGIIIAVALALVIVVTILI) form a helical membrane-spanning segment. The Cytoplasmic segment spans residues 175-245 (LLIRYCWLRR…GIGDSRKDRK (71 aa)). Basic and acidic residues-rich tracts occupy residues 199 to 208 (KLHKAKDSSK) and 224 to 245 (TRGK…KDRK). Residues 199–245 (KLHKAKDSSKRSSRQTPILYAMLDQTRGKSSEKKAKGGIGDSRKDRK) form a disordered region.

The protein belongs to the myelin P0 protein family.

It is found in the cell membrane. Creation of an extracellular membrane face which guides the wrapping process and ultimately compacts adjacent lamellae. This chain is Myelin protein P0 (mpz), found in Xenopus laevis (African clawed frog).